Here is a 102-residue protein sequence, read N- to C-terminus: MHVKQGDTVKILTGKDKGKIGEITKIIKGSNQVVVQDINVKKKHVKPRKEGEIGKILQFEAPIHSSNVMVYNAESQVASRVNYQKDESGKKIRVFKKLLNTN.

The protein belongs to the universal ribosomal protein uL24 family. Part of the 50S ribosomal subunit.

The protein resides in the plastid. It localises to the chloroplast. In terms of biological role, one of two assembly initiator proteins, it binds directly to the 5'-end of the 23S rRNA, where it nucleates assembly of the 50S subunit. The protein is Large ribosomal subunit protein uL24c (rpl24) of Rhodomonas salina (Cryptomonas salina).